A 109-amino-acid polypeptide reads, in one-letter code: uncharacterized protein (109 aa).

Residues 1–19 form the signal peptide; sequence MKKFALLAGLFVFAPMTWA.

This is an uncharacterized protein from Escherichia coli O6:H1 (strain CFT073 / ATCC 700928 / UPEC).